Consider the following 242-residue polypeptide: MAIMASRKHLKRFKSPVHWPIHPKEYKWTVKPSPGPHAIENSLPLMIIVRDILKVADNAREARKIINSGEVLVDGRPRKNYKFPVGFMDVVSIPRTGDVYRVLPDERGRLVLHPIDEENAGFKLCKIVNKTTIKGGRTQLNLHDGRNYLSDDEFRVGDVVKLSIPEQEILERIPFEKDSLGLVTGGRHTGEIGKIKKINITRSSMPNTAVIETGAGKTFLTLKDYVFVIGKDESVISLPGGK.

The S4 RNA-binding domain occupies 43–106 (LPLMIIVRDI…GDVYRVLPDE (64 aa)).

Belongs to the eukaryotic ribosomal protein eS4 family.

The protein is Small ribosomal subunit protein eS4 (rps4e) of Methanothermobacter thermautotrophicus (strain ATCC 29096 / DSM 1053 / JCM 10044 / NBRC 100330 / Delta H) (Methanobacterium thermoautotrophicum).